Here is a 146-residue protein sequence, read N- to C-terminus: Angiogenin (146 aa).

Residues 1–24 form the signal peptide; sequence MVMGLGLFLLVFMLGLGLTPPTLA. Gln-25 bears the Pyrrolidone carboxylic acid mark. The active-site Proton acceptor is His-37. Position 45 (Arg-45) interacts with tRNA. Cystine bridges form between Cys-50-Cys-105, Cys-63-Cys-116, and Cys-81-Cys-131. Residues 55–59 carry the Nucleolar localization signal motif; it reads RRRHL. The tRNA site is built by Cys-105 and Ile-127. His-138 (proton donor) is an active-site residue.

This sequence belongs to the pancreatic ribonuclease family. Homodimer. Interacts with RNH1; inhibiting ANG ribonuclease activity. Interacts with PCNA.

The protein localises to the secreted. The protein resides in the nucleus. It localises to the nucleolus. Its subcellular location is the cytoplasm. It is found in the stress granule. Has weak tRNA ribonuclease activity by itself due to partial autoinhibition by its C-terminus, which folds into a short alpha-helix that partially occludes the substrate-binding site. In absence of stress, the ribonuclease activity is inhibited by RNH1 in the cytoplasm. In response to stress, dissociates from RNH1 in the cytoplasm and associates with cytoplasmic ribosomes with vacant A-sites: ribosomes directly activate the tRNA ribonuclease activity of ANG by refolding the C-terminal alpha-helix. In response to stress, the angiogenic activity of ANG is inhibited by RNH1 in the nucleus. Secreted ribonuclease that can either promote or restrict cell proliferation of target cells, depending on the context. Endocytosed in target cells via its receptor PLXNB2 and translocates to the cytoplasm or nucleus. Under stress conditions, localizes to the cytoplasm and promotes the assembly of stress granules (SGs): specifically cleaves a subset of tRNAs within anticodon loops to produce tRNA-derived stress-induced fragments (tiRNAs), resulting in translation repression and inhibition of cell proliferation. tiRNas also prevent formation of apoptosome, thereby promoting cell survival. Preferentially cleaves RNAs between a pyrimidine and an adenosine residue, suggesting that it cleaves the anticodon loop of tRNA(Ala) (32-UUAGCAU-38) after positions 33 and 36. Cleaves a subset of tRNAs, including tRNA(Ala), tRNA(Glu), tRNA(Gly), tRNA(Lys), tRNA(Val), tRNA(His), tRNA(Asp) and tRNA(Sec). Under growth conditions and in differentiated cells, translocates to the nucleus and stimulates ribosomal RNA (rRNA) transcription, including that containing the initiation site sequences of 45S rRNA, thereby promoting cell growth and proliferation. Angiogenin induces vascularization of normal and malignant tissues via its ability to promote rRNA transcription. Involved in hematopoietic stem and progenitor cell (HSPC) growth and survival by promoting rRNA transcription in growth conditions and inhibiting translation in response to stress, respectively. Mediates the crosstalk between myeloid and intestinal epithelial cells to protect the intestinal epithelial barrier integrity: secreted by myeloid cells and promotes intestinal epithelial cells proliferation and survival. Also mediates osteoclast-endothelial cell crosstalk in growing bone: produced by osteoclasts and protects the neighboring vascular cells against senescence by promoting rRNA transcription. This chain is Angiogenin (ANG), found in Macaca mulatta (Rhesus macaque).